A 143-amino-acid chain; its full sequence is UPF0251 protein Rru_A1194 (143 aa).

Positions 100–143 (LDGSACPNRRQRRGPCARRGAAGALARQTGDEPPSSPTDNEKDD) are disordered. A compositionally biased stretch (low complexity) spans 116-126 (ARRGAAGALAR).

The protein belongs to the UPF0251 family.

This is UPF0251 protein Rru_A1194 from Rhodospirillum rubrum (strain ATCC 11170 / ATH 1.1.1 / DSM 467 / LMG 4362 / NCIMB 8255 / S1).